Reading from the N-terminus, the 110-residue chain is Phosphoribosyl-AMP cyclohydrolase (110 aa).

Asp74 is a Mg(2+) binding site. Cys75 is a Zn(2+) binding site. The Mg(2+) site is built by Asp76 and Asp78. The Zn(2+) site is built by Cys91 and Cys98.

This sequence belongs to the PRA-CH family. Homodimer. Mg(2+) serves as cofactor. Zn(2+) is required as a cofactor.

It localises to the cytoplasm. The catalysed reaction is 1-(5-phospho-beta-D-ribosyl)-5'-AMP + H2O = 1-(5-phospho-beta-D-ribosyl)-5-[(5-phospho-beta-D-ribosylamino)methylideneamino]imidazole-4-carboxamide. The protein operates within amino-acid biosynthesis; L-histidine biosynthesis; L-histidine from 5-phospho-alpha-D-ribose 1-diphosphate: step 3/9. Its function is as follows. Catalyzes the hydrolysis of the adenine ring of phosphoribosyl-AMP. This Lacticaseibacillus casei (strain BL23) (Lactobacillus casei) protein is Phosphoribosyl-AMP cyclohydrolase.